Consider the following 435-residue polypeptide: Tol-Pal system protein TolB (435 aa).

Positions 1–24 are cleaved as a signal peptide; sequence MIPMPKMIRSLLLLFCLLPLGAQA.

The protein belongs to the TolB family. The Tol-Pal system is composed of five core proteins: the inner membrane proteins TolA, TolQ and TolR, the periplasmic protein TolB and the outer membrane protein Pal. They form a network linking the inner and outer membranes and the peptidoglycan layer.

Its subcellular location is the periplasm. Its function is as follows. Part of the Tol-Pal system, which plays a role in outer membrane invagination during cell division and is important for maintaining outer membrane integrity. This Thioalkalivibrio sulfidiphilus (strain HL-EbGR7) protein is Tol-Pal system protein TolB.